Consider the following 357-residue polypeptide: D-alanine--D-alanine ligase (357 aa).

In terms of domain architecture, ATP-grasp spans 145 to 339; that stretch reads KEVMLYHGIQ…YGDLVMDIVN (195 aa). Residue 172 to 225 participates in ATP binding; the sequence is PFDFPVVVKPTSGGSSVGTHIIHNQEELESGLEDVFRFDNSAIVEEFTPGREFS. Residues aspartate 294, glutamate 306, and asparagine 308 each coordinate Mg(2+).

The protein belongs to the D-alanine--D-alanine ligase family. It depends on Mg(2+) as a cofactor. The cofactor is Mn(2+).

It localises to the cytoplasm. It carries out the reaction 2 D-alanine + ATP = D-alanyl-D-alanine + ADP + phosphate + H(+). It participates in cell wall biogenesis; peptidoglycan biosynthesis. Functionally, cell wall formation. In Lacticaseibacillus paracasei (strain ATCC 334 / BCRC 17002 / CCUG 31169 / CIP 107868 / KCTC 3260 / NRRL B-441) (Lactobacillus paracasei), this protein is D-alanine--D-alanine ligase.